The primary structure comprises 422 residues: Exodeoxyribonuclease 7 large subunit (422 aa).

Belongs to the XseA family. Heterooligomer composed of large and small subunits.

It localises to the cytoplasm. The catalysed reaction is Exonucleolytic cleavage in either 5'- to 3'- or 3'- to 5'-direction to yield nucleoside 5'-phosphates.. Bidirectionally degrades single-stranded DNA into large acid-insoluble oligonucleotides, which are then degraded further into small acid-soluble oligonucleotides. The polypeptide is Exodeoxyribonuclease 7 large subunit (Leptospira borgpetersenii serovar Hardjo-bovis (strain JB197)).